We begin with the raw amino-acid sequence, 478 residues long: Ribosomal RNA small subunit methyltransferase F (478 aa).

S-adenosyl-L-methionine-binding positions include 125 to 131 (AAAPGSK), E149, D176, and D194. Residue C247 is the Nucleophile of the active site.

This sequence belongs to the class I-like SAM-binding methyltransferase superfamily. RsmB/NOP family.

It localises to the cytoplasm. It catalyses the reaction cytidine(1407) in 16S rRNA + S-adenosyl-L-methionine = 5-methylcytidine(1407) in 16S rRNA + S-adenosyl-L-homocysteine + H(+). Functionally, specifically methylates the cytosine at position 1407 (m5C1407) of 16S rRNA. The sequence is that of Ribosomal RNA small subunit methyltransferase F from Serratia proteamaculans (strain 568).